Consider the following 417-residue polypeptide: Serine hydroxymethyltransferase (417 aa).

(6S)-5,6,7,8-tetrahydrofolate contacts are provided by residues L121 and 125-127 (GHL). K229 is subject to N6-(pyridoxal phosphate)lysine. 355–357 (SPF) serves as a coordination point for (6S)-5,6,7,8-tetrahydrofolate.

The protein belongs to the SHMT family. Homodimer. Pyridoxal 5'-phosphate is required as a cofactor.

It is found in the cytoplasm. It carries out the reaction (6R)-5,10-methylene-5,6,7,8-tetrahydrofolate + glycine + H2O = (6S)-5,6,7,8-tetrahydrofolate + L-serine. Its pathway is one-carbon metabolism; tetrahydrofolate interconversion. The protein operates within amino-acid biosynthesis; glycine biosynthesis; glycine from L-serine: step 1/1. Catalyzes the reversible interconversion of serine and glycine with tetrahydrofolate (THF) serving as the one-carbon carrier. This reaction serves as the major source of one-carbon groups required for the biosynthesis of purines, thymidylate, methionine, and other important biomolecules. Also exhibits THF-independent aldolase activity toward beta-hydroxyamino acids, producing glycine and aldehydes, via a retro-aldol mechanism. The chain is Serine hydroxymethyltransferase from Shewanella baltica (strain OS195).